A 344-amino-acid polypeptide reads, in one-letter code: MSNAITMGIFWHLIGAASAACFYAPFKKVKKWSWETMWSVGGIVSWIILPWAISALLLPNFWAYYSSFSLSTLLPVFLFGAMWGIGNINYGLTMRYLGMSMGIGIAIGITLIVGTLMTPIINGNFDVLLNTEGGRMTLLGVLVALIGVGIVTRAGQLKERKMGIKAEEFNLKKGLVLAVMCGIFSAGMSFAMNAAKPMHEAAAALGVDPLYVALPSYVIIMGGGAIINLGFCFIRLAKVKDLSLKADFSLAKPLIIHNVLLSALGGLMWYLQFFFYAWGHARIPAQYDYISWMLHMSFYVLCGGIVGLVLKEWNNAGRRPVTVLSLGCVVIIVAANIVGIGMAN.

A run of 10 helical transmembrane segments spans residues 4–24 (AITMGIFWHLIGAASAACFYA), 38–58 (WSVGGIVSWIILPWAISALLL), 68–88 (FSLSTLLPVFLFGAMWGIGNI), 101–121 (MGIGIAIGITLIVGTLMTPII), 137–157 (TLLGVLVALIGVGIVTRAGQL), 175–195 (LVLAVMCGIFSAGMSFAMNAA), 214–234 (LPSYVIIMGGGAIINLGFCFI), 259–279 (VLLSALGGLMWYLQFFFYAWG), 290–310 (ISWMLHMSFYVLCGGIVGLVL), and 323–343 (VLSLGCVVIIVAANIVGIGMA).

The protein belongs to the L-rhamnose transporter (TC 2.A.7.6) family.

The protein localises to the cell inner membrane. The catalysed reaction is L-rhamnopyranose(in) + H(+)(in) = L-rhamnopyranose(out) + H(+)(out). Uptake of L-rhamnose across the cytoplasmic membrane with the concomitant transport of protons into the cell (symport system). The polypeptide is L-rhamnose-proton symporter (Shigella boydii serotype 18 (strain CDC 3083-94 / BS512)).